A 303-amino-acid polypeptide reads, in one-letter code: Coenzyme PQQ synthesis protein B (303 aa).

It belongs to the PqqB family.

It functions in the pathway cofactor biosynthesis; pyrroloquinoline quinone biosynthesis. Its function is as follows. May be involved in the transport of PQQ or its precursor to the periplasm. In Pseudomonas putida (strain W619), this protein is Coenzyme PQQ synthesis protein B.